The primary structure comprises 519 residues: MLAKHSKLFFTGSVVFLIVAIVLASWGFPKIISTRIQKSIQLENSSMMYDKWVKLPIPLIFKVYFFNVTNAEGINEGERPILQEIGPYVYKQYRERTVLGYGPNDTIKYMLKKNFVFDPEASNGLTEDDDVTVINFPYMAALLTIQQMMPSAVAMVNRALEQFFSNLTDPFMRVKVKDLLFDGVFLNCDGDSPALSLVCAKLKADSPPTMRPAEDGVNGYYFSMFSHLNRTETGPYEMVRGTEDVFALGNIVSYKEKKSVSAWGDEYCNRINGSDASIFPPIDENNVPERLYTFEPEICRSLYASLAGKATLFNISTYYYEISSSALASKSANPDNKCYCKKDWSASHDGCLLMGVFNLMPCQGAPAIASLPHFYLASEELLEYFEDGVKPDKEKHNTYVYIDPVTGVVLKGVKRLQFNIELRNMPRVPQLQAVPTGLFPMLWIEEGAVMTPDLQQELRDAHALLSYAQLARWIILAAAIILAIIATITVARSTSLISWPRNSNSVNFIIGPMVNDKMR.

Topologically, residues 1 to 7 (MLAKHSK) are cytoplasmic. A helical membrane pass occupies residues 8 to 28 (LFFTGSVVFLIVAIVLASWGF). At 29 to 469 (PKIISTRIQK…DAHALLSYAQ (441 aa)) the chain is on the extracellular side. Asparagine 44, asparagine 67, asparagine 104, asparagine 166, asparagine 229, asparagine 272, and asparagine 314 each carry an N-linked (GlcNAc...) asparagine glycan. Disulfide bonds link cysteine 268–cysteine 338, cysteine 299–cysteine 362, and cysteine 340–cysteine 351. The helical transmembrane segment at 470–490 (LARWIILAAAIILAIIATITV) threads the bilayer. Residues 491–519 (ARSTSLISWPRNSNSVNFIIGPMVNDKMR) lie on the Cytoplasmic side of the membrane.

This sequence belongs to the CD36 family. In terms of tissue distribution, localizes to both male and female antennae but not the leg, wing, gut, head or thoracic ganglia. Detected throughout the sensory epithelium, associating with both sex-pheromone sensilla and plant-volatile sensilla. Differentially expressed among different sensilla and different neurons within a given sensillum.

The protein resides in the cell membrane. Plays an olfactory role that is not restricted to pheromone sensitivity. This is Sensory neuron membrane protein 2 from Manduca sexta (Tobacco hawkmoth).